Reading from the N-terminus, the 206-residue chain is Carbonic anhydrase (206 aa).

Residue lysine 11 forms an Isoglutamyl lysine isopeptide (Lys-Gln) (interchain with Q-Cter in protein Pup) linkage. Zn(2+) is bound by residues cysteine 51, aspartate 53, histidine 104, and cysteine 107.

The protein belongs to the beta-class carbonic anhydrase family. Homotetramer. Zn(2+) serves as cofactor.

The enzyme catalyses hydrogencarbonate + H(+) = CO2 + H2O. Its function is as follows. Catalyzes the reversible hydration of carbon dioxide to form bicarbonate. The protein is Carbonic anhydrase (cynT) of Mycolicibacterium smegmatis (strain ATCC 700084 / mc(2)155) (Mycobacterium smegmatis).